Reading from the N-terminus, the 251-residue chain is Triosephosphate isomerase (251 aa).

9–11 is a substrate binding site; the sequence is NWK. The Electrophile role is filled by His95. The active-site Proton acceptor is the Glu167. Residues Gly173, Ser213, and 234-235 each bind substrate; that span reads GG. Ser213 carries the phosphoserine modification.

It belongs to the triosephosphate isomerase family. In terms of assembly, homodimer.

It localises to the cytoplasm. It carries out the reaction D-glyceraldehyde 3-phosphate = dihydroxyacetone phosphate. Its pathway is carbohydrate biosynthesis; gluconeogenesis. It functions in the pathway carbohydrate degradation; glycolysis; D-glyceraldehyde 3-phosphate from glycerone phosphate: step 1/1. Involved in the gluconeogenesis. Catalyzes stereospecifically the conversion of dihydroxyacetone phosphate (DHAP) to D-glyceraldehyde-3-phosphate (G3P). In Priestia megaterium (strain DSM 319 / IMG 1521) (Bacillus megaterium), this protein is Triosephosphate isomerase.